The following is a 396-amino-acid chain: Putative glutamate--cysteine ligase 2-2 (396 aa).

Belongs to the glutamate--cysteine ligase type 2 family. YbdK subfamily.

The catalysed reaction is L-cysteine + L-glutamate + ATP = gamma-L-glutamyl-L-cysteine + ADP + phosphate + H(+). Functionally, ATP-dependent carboxylate-amine ligase which exhibits weak glutamate--cysteine ligase activity. The sequence is that of Putative glutamate--cysteine ligase 2-2 from Mycolicibacterium smegmatis (strain ATCC 700084 / mc(2)155) (Mycobacterium smegmatis).